Here is a 362-residue protein sequence, read N- to C-terminus: Phosphoserine aminotransferase (362 aa).

R43 is a binding site for L-glutamate. Pyridoxal 5'-phosphate contacts are provided by residues 77 to 78, W103, T153, D173, and Q196; that span reads AR. Residue K197 is modified to N6-(pyridoxal phosphate)lysine.

The protein belongs to the class-V pyridoxal-phosphate-dependent aminotransferase family. SerC subfamily. In terms of assembly, homodimer. Pyridoxal 5'-phosphate is required as a cofactor.

Its subcellular location is the cytoplasm. It carries out the reaction O-phospho-L-serine + 2-oxoglutarate = 3-phosphooxypyruvate + L-glutamate. The catalysed reaction is 4-(phosphooxy)-L-threonine + 2-oxoglutarate = (R)-3-hydroxy-2-oxo-4-phosphooxybutanoate + L-glutamate. The protein operates within amino-acid biosynthesis; L-serine biosynthesis; L-serine from 3-phospho-D-glycerate: step 2/3. It participates in cofactor biosynthesis; pyridoxine 5'-phosphate biosynthesis; pyridoxine 5'-phosphate from D-erythrose 4-phosphate: step 3/5. Its function is as follows. Catalyzes the reversible conversion of 3-phosphohydroxypyruvate to phosphoserine and of 3-hydroxy-2-oxo-4-phosphonooxybutanoate to phosphohydroxythreonine. The protein is Phosphoserine aminotransferase of Legionella pneumophila (strain Paris).